Here is a 464-residue protein sequence, read N- to C-terminus: Asparagine--tRNA ligase (464 aa).

It belongs to the class-II aminoacyl-tRNA synthetase family. In terms of assembly, homodimer.

Its subcellular location is the cytoplasm. It catalyses the reaction tRNA(Asn) + L-asparagine + ATP = L-asparaginyl-tRNA(Asn) + AMP + diphosphate + H(+). This chain is Asparagine--tRNA ligase, found in Clostridium beijerinckii (strain ATCC 51743 / NCIMB 8052) (Clostridium acetobutylicum).